The chain runs to 240 residues: Adapter protein MecA (240 aa).

A compositionally biased stretch (basic and acidic residues) spans 119-132 (QRKQQKKNHQDKQQ). The interval 119–138 (QRKQQKKNHQDKQQRRAHKP) is disordered.

The protein belongs to the MecA family. In terms of assembly, homodimer.

In terms of biological role, enables the recognition and targeting of unfolded and aggregated proteins to the ClpC protease or to other proteins involved in proteolysis. The polypeptide is Adapter protein MecA (Staphylococcus epidermidis (strain ATCC 35984 / DSM 28319 / BCRC 17069 / CCUG 31568 / BM 3577 / RP62A)).